We begin with the raw amino-acid sequence, 264 residues long: Diphthine synthase (264 aa).

S-adenosyl-L-methionine is bound by residues leucine 10, aspartate 87, valine 90, 115–116, leucine 166, alanine 209, and histidine 234; that span reads SI.

The protein belongs to the diphthine synthase family. Homodimer.

The catalysed reaction is 2-[(3S)-amino-3-carboxypropyl]-L-histidyl-[translation elongation factor 2] + 3 S-adenosyl-L-methionine = diphthine-[translation elongation factor 2] + 3 S-adenosyl-L-homocysteine + 3 H(+). The protein operates within protein modification; peptidyl-diphthamide biosynthesis. S-adenosyl-L-methionine-dependent methyltransferase that catalyzes the trimethylation of the amino group of the modified target histidine residue in translation elongation factor 2 (EF-2), to form an intermediate called diphthine. The three successive methylation reactions represent the second step of diphthamide biosynthesis. The polypeptide is Diphthine synthase (Thermococcus onnurineus (strain NA1)).